Here is a 231-residue protein sequence, read N- to C-terminus: Mediator of RNA polymerase II transcription subunit 18 (231 aa).

A coiled-coil region spans residues His191–Leu218.

The protein belongs to the Mediator complex subunit 18 family. Component of the Mediator complex.

It localises to the nucleus. In terms of biological role, component of the Mediator complex, a coactivator involved in the regulated transcription of nearly all RNA polymerase II-dependent genes. Mediator functions as a bridge to convey information from gene-specific regulatory proteins to the basal RNA polymerase II transcription machinery. Mediator is recruited to promoters by direct interactions with regulatory proteins and serves as a scaffold for the assembly of a functional preinitiation complex with RNA polymerase II and the general transcription factors. The polypeptide is Mediator of RNA polymerase II transcription subunit 18 (SRB5) (Yarrowia lipolytica (strain CLIB 122 / E 150) (Yeast)).